A 495-amino-acid polypeptide reads, in one-letter code: Amorpha-4,11-diene 12-monooxygenase (495 aa).

Topologically, residues 1-6 (MKSILK) are cytoplasmic. Residues 7–29 (AMALSLTTSIALATILLFVYKFA) form a helical; Signal-anchor for type II membrane protein membrane-spanning segment. The Lumenal portion of the chain corresponds to 30 to 495 (TRSKSTKKSL…KTELLLVPSF (466 aa)). Asn176, Asn261, Asn267, Asn386, and Asn417 each carry an N-linked (GlcNAc...) asparagine glycan. A heme-binding site is contributed by Cys439.

The protein belongs to the cytochrome P450 family. The cofactor is heme. In terms of tissue distribution, highly expressed both in apical and sub-apical cells of glandular secretory trichomes. Detected in flower buds, leaves and roots. Also present in non-glandular trichome cells.

It localises to the endoplasmic reticulum membrane. It carries out the reaction (+)-amorpha-4,11-diene + 3 reduced [NADPH--hemoprotein reductase] + 3 O2 = (+)-artemisinate + 3 oxidized [NADPH--hemoprotein reductase] + 4 H2O + 4 H(+). The protein operates within sesquiterpene biosynthesis. In terms of biological role, involved in the biosynthesis of the antimalarial endoperoxide artemisinin. Catalyzes three consecutive oxidations of amorpha-4,11-diene to produce artemisinic acid, with artemisinic alcohol and artemisinic aldehyde as intermediates products, but is unable to oxidize germacrene A. No activity with limonene, alpha-pinene, beta-pinene, pinocarveol, (-)-alloisolongifolene, caryophyllene, (-)-alpha-gurjunene, (+)-gamma-gurjunene, (+)-ledene, (+)-beta-selinene and (+)-valencene as substrates. This Artemisia annua (Sweet wormwood) protein is Amorpha-4,11-diene 12-monooxygenase.